The following is a 630-amino-acid chain: Chaperone protein DnaK (630 aa).

Thr198 bears the Phosphothreonine; by autocatalysis mark. The interval Ala604–Lys630 is disordered. A compositionally biased stretch (acidic residues) spans Asp617 to Lys630.

This sequence belongs to the heat shock protein 70 family.

Its function is as follows. Acts as a chaperone. The chain is Chaperone protein DnaK from Rhizorhabdus wittichii (strain DSM 6014 / CCUG 31198 / JCM 15750 / NBRC 105917 / EY 4224 / RW1) (Sphingomonas wittichii).